Consider the following 280-residue polypeptide: Tryptophan synthase alpha chain (280 aa).

Active-site proton acceptor residues include Glu49 and Asp60.

The protein belongs to the TrpA family. Tetramer of two alpha and two beta chains.

It carries out the reaction (1S,2R)-1-C-(indol-3-yl)glycerol 3-phosphate + L-serine = D-glyceraldehyde 3-phosphate + L-tryptophan + H2O. It functions in the pathway amino-acid biosynthesis; L-tryptophan biosynthesis; L-tryptophan from chorismate: step 5/5. In terms of biological role, the alpha subunit is responsible for the aldol cleavage of indoleglycerol phosphate to indole and glyceraldehyde 3-phosphate. The chain is Tryptophan synthase alpha chain from Corynebacterium efficiens (strain DSM 44549 / YS-314 / AJ 12310 / JCM 11189 / NBRC 100395).